A 562-amino-acid chain; its full sequence is Dihydroxy-acid dehydratase (562 aa).

Position 53 (C53) interacts with [2Fe-2S] cluster. D85 contributes to the Mg(2+) binding site. C126 contacts [2Fe-2S] cluster. The Mg(2+) site is built by D127 and K128. Position 128 is an N6-carboxylysine (K128). Position 198 (C198) interacts with [2Fe-2S] cluster. E449 contacts Mg(2+). The Proton acceptor role is filled by S475.

Belongs to the IlvD/Edd family. As to quaternary structure, homodimer. [2Fe-2S] cluster is required as a cofactor. Requires Mg(2+) as cofactor.

It carries out the reaction (2R)-2,3-dihydroxy-3-methylbutanoate = 3-methyl-2-oxobutanoate + H2O. The enzyme catalyses (2R,3R)-2,3-dihydroxy-3-methylpentanoate = (S)-3-methyl-2-oxopentanoate + H2O. It functions in the pathway amino-acid biosynthesis; L-isoleucine biosynthesis; L-isoleucine from 2-oxobutanoate: step 3/4. Its pathway is amino-acid biosynthesis; L-valine biosynthesis; L-valine from pyruvate: step 3/4. Its function is as follows. Functions in the biosynthesis of branched-chain amino acids. Catalyzes the dehydration of (2R,3R)-2,3-dihydroxy-3-methylpentanoate (2,3-dihydroxy-3-methylvalerate) into 2-oxo-3-methylpentanoate (2-oxo-3-methylvalerate) and of (2R)-2,3-dihydroxy-3-methylbutanoate (2,3-dihydroxyisovalerate) into 2-oxo-3-methylbutanoate (2-oxoisovalerate), the penultimate precursor to L-isoleucine and L-valine, respectively. In Methylococcus capsulatus (strain ATCC 33009 / NCIMB 11132 / Bath), this protein is Dihydroxy-acid dehydratase.